The primary structure comprises 771 residues: Phosphoglycerate kinase (771 aa).

Positions 1 to 406 are phosphoglycerate kinase; that stretch reads MKKLITDLNL…PGIDAIQNYE (406 aa). Substrate is bound by residues 20–22, R35, 58–61, R118, and R155; these read DLN and HLGR. ATP contacts are provided by residues K206, G295, E334, and 361–364; that span reads GGDS. A unknown region spans residues 407–771; the sequence is QTYEQYDSQV…KRFWFFGRKR (365 aa).

It in the N-terminal section; belongs to the phosphoglycerate kinase family. Monomer.

It localises to the cytoplasm. The catalysed reaction is (2R)-3-phosphoglycerate + ATP = (2R)-3-phospho-glyceroyl phosphate + ADP. It functions in the pathway carbohydrate degradation; glycolysis; pyruvate from D-glyceraldehyde 3-phosphate: step 2/5. This is Phosphoglycerate kinase (pgk) from Mycoplasmopsis pulmonis (strain UAB CTIP) (Mycoplasma pulmonis).